Consider the following 167-residue polypeptide: Endoribonuclease YbeY (167 aa).

The Zn(2+) site is built by His132, His136, and His142.

The protein belongs to the endoribonuclease YbeY family. Zn(2+) is required as a cofactor.

Its subcellular location is the cytoplasm. Its function is as follows. Single strand-specific metallo-endoribonuclease involved in late-stage 70S ribosome quality control and in maturation of the 3' terminus of the 16S rRNA. In Clostridium beijerinckii (strain ATCC 51743 / NCIMB 8052) (Clostridium acetobutylicum), this protein is Endoribonuclease YbeY.